The following is a 1942-amino-acid chain: GREB1-like protein (1942 aa).

4 disordered regions span residues 76 to 101 (SSNSVEDMDDEDDSDTSSPPLPYLQG), 235 to 306 (PFSN…GTKT), 325 to 373 (MDGR…HRSW), and 1123 to 1256 (TKTA…RTQV). A compositionally biased stretch (acidic residues) spans 81 to 90 (EDMDDEDDSD). Positions 237–253 (SNSASSSKPSSSSSLSS) are enriched in low complexity. Positions 338-362 (NPLSTPSHGYRTTETGDSPASTAMS) are enriched in polar residues. The span at 1127–1155 (TSREERPREGERSSGETAEHDDLPMELER) shows a compositional bias: basic and acidic residues. A compositionally biased stretch (low complexity) spans 1158–1171 (SNASAATRTSGSTT). The span at 1172-1202 (ENGVSSSSILDKPSSQSDPCGSRTMMDSCSS) shows a compositional bias: polar residues. Over residues 1212 to 1248 (SQAPSSSSTSSFSSASSSSSSSSSPAAQRPSQSTQAP) the composition is skewed to low complexity. The helical transmembrane segment at 1861–1881 (GVIFSGLLLYLCDSFVVSSLL) threads the bilayer.

It belongs to the GREB1 family.

It is found in the membrane. Functionally, plays a major role in early metanephros development. In Danio rerio (Zebrafish), this protein is GREB1-like protein (greb1l).